A 298-amino-acid polypeptide reads, in one-letter code: N-acetylmuramic acid 6-phosphate etherase (298 aa).

In terms of domain architecture, SIS spans 55-218; it reads IHAQVSGGGR…STGLMIKSGK (164 aa). Residue E83 is the Proton donor of the active site. Residue E114 is part of the active site.

The protein belongs to the GCKR-like family. MurNAc-6-P etherase subfamily. In terms of assembly, homodimer.

The enzyme catalyses N-acetyl-D-muramate 6-phosphate + H2O = N-acetyl-D-glucosamine 6-phosphate + (R)-lactate. It functions in the pathway amino-sugar metabolism; 1,6-anhydro-N-acetylmuramate degradation. The protein operates within amino-sugar metabolism; N-acetylmuramate degradation. Its pathway is cell wall biogenesis; peptidoglycan recycling. Functionally, specifically catalyzes the cleavage of the D-lactyl ether substituent of MurNAc 6-phosphate, producing GlcNAc 6-phosphate and D-lactate. Together with AnmK, is also required for the utilization of anhydro-N-acetylmuramic acid (anhMurNAc) either imported from the medium or derived from its own cell wall murein, and thus plays a role in cell wall recycling. The protein is N-acetylmuramic acid 6-phosphate etherase of Escherichia fergusonii (strain ATCC 35469 / DSM 13698 / CCUG 18766 / IAM 14443 / JCM 21226 / LMG 7866 / NBRC 102419 / NCTC 12128 / CDC 0568-73).